A 258-amino-acid chain; its full sequence is Granzyme A (258 aa).

Residues 1–26 form the signal peptide; it reads MNIPFPFSFPPAICLLLIPGVFPVSC. The propeptide at 27-28 is activation peptide; it reads EG. In terms of domain architecture, Peptidase S1 spans 29–255; it reads IIGGNEVAPH…HLNWIKKTIA (227 aa). A disulfide bond links Cys52 and Cys68. Active-site charge relay system residues include His67 and Asp112. Cystine bridges form between Cys146–Cys217, Cys178–Cys196, and Cys207–Cys230. Asn169 carries N-linked (GlcNAc...) asparagine glycosylation. Ser211 functions as the Charge relay system in the catalytic mechanism.

This sequence belongs to the peptidase S1 family. Granzyme subfamily. In terms of assembly, homodimer; disulfide-linked. Interacts with APEX1.

The protein resides in the secreted. It is found in the cytoplasmic granule. It catalyses the reaction Hydrolysis of proteins, including fibronectin, type IV collagen and nucleolin. Preferential cleavage: -Arg-|-Xaa-, -Lys-|-Xaa- &gt;&gt; -Phe-|-Xaa- in small molecule substrates.. In terms of biological role, abundant protease in the cytosolic granules of cytotoxic T-cells and NK-cells which activates caspase-independent pyroptosis when delivered into the target cell through the immunological synapse. It cleaves after Lys or Arg. Cleaves APEX1 after 'Lys-31' and destroys its oxidative repair activity. Cleaves the nucleosome assembly protein SET after 'Lys-189', which disrupts its nucleosome assembly activity and allows the SET complex to translocate into the nucleus to nick and degrade the DNA. The sequence is that of Granzyme A (GZMA) from Bos taurus (Bovine).